The chain runs to 81 residues: Short neurotoxin 1 (81 aa).

The N-terminal stretch at 1-21 is a signal peptide; that stretch reads MKTLLLSPVVVTIVCLDLGYT. Cystine bridges form between Cys24–Cys43, Cys38–Cys60, Cys62–Cys73, and Cys74–Cys79.

It belongs to the three-finger toxin family. Short-chain subfamily. Type I alpha-neurotoxin sub-subfamily. In terms of tissue distribution, expressed by the venom gland.

It localises to the secreted. Its function is as follows. Binds to muscle nicotinic acetylcholine receptor (nAChR) and inhibit acetylcholine from binding to the receptor, thereby impairing neuromuscular transmission. This Hydrophis peronii (Spiny-headed seasnake) protein is Short neurotoxin 1.